A 245-amino-acid polypeptide reads, in one-letter code: Folate receptor gamma (245 aa).

The signal sequence occupies residues 1–22 (MDMAWQMMQLLLLALVTAAGSA). Intrachain disulfides connect C37-C65, C57-C105, C66-C109, C89-C175, C96-C146, C135-C209, C139-C189, and C152-C169. Folate contacts are provided by D103 and Y107. An N-linked (GlcNAc...) asparagine glycan is attached at N121. Folate-binding positions include 124–128 (WRKER), 157–162 (HKGWNW), and S196. N161 is a glycosylation site (N-linked (GlcNAc...) asparagine). N201 carries N-linked (GlcNAc...) asparagine glycosylation.

Belongs to the folate receptor family. As to expression, spleen, thymus, bone marrow, ovarian carcinoma, and uterine carcinoma.

The protein localises to the secreted. Its function is as follows. Binds to folate and reduced folic acid derivatives and mediates delivery of 5-methyltetrahydrofolate to the interior of cells. Isoform Short does not bind folate. The sequence is that of Folate receptor gamma (FOLR3) from Homo sapiens (Human).